We begin with the raw amino-acid sequence, 180 residues long: Ribosome rescue factor SmrB (180 aa).

Residues 98-173 enclose the Smr domain; the sequence is LDLHGLTQLQ…GNAALLVLVA (76 aa).

It belongs to the SmrB family. In terms of assembly, associates with collided ribosomes, but not with correctly translating polysomes.

In terms of biological role, acts as a ribosome collision sensor. Detects stalled/collided disomes (pairs of ribosomes where the leading ribosome is stalled and a second ribosome has collided with it) and endonucleolytically cleaves mRNA at the 5' boundary of the stalled ribosome. Stalled/collided disomes form a new interface (primarily via the 30S subunits) that binds SmrB. Cleaved mRNA becomes available for tmRNA ligation, leading to ribosomal subunit dissociation and rescue of stalled ribosomes. The sequence is that of Ribosome rescue factor SmrB from Pectobacterium carotovorum subsp. carotovorum (strain PC1).